A 481-amino-acid chain; its full sequence is Amino acid permease 6 (481 aa).

The Cytoplasmic portion of the chain corresponds to 1-36 (MEKKKSMFVEQSFPEHEIGDTNKNFDEDGRDKRTGT). A run of 2 helical transmembrane segments spans residues 37–57 (WMTG…LSLA) and 58–78 (WAIA…FSFI). At 79–125 (TYFTSTMLADCYRSPDPVTGKRNYTYMEVVRSYLGGRKVQLCGLAQY) the chain is on the cytoplasmic side. The chain crosses the membrane as a helical span at residues 126-146 (GNLIGITIGYTITASISMVAV). Over 147–167 (KRSNCFHKNGHNVKCATSNTP) the chain is Extracellular. A helical membrane pass occupies residues 168–188 (FMIIFAIIQIILSQIPNFHNL). Residues 189–190 (SW) lie on the Cytoplasmic side of the membrane. Residues 191-211 (LSILAAVMSFCYASIGVGLSI) form a helical membrane-spanning segment. The Extracellular portion of the chain corresponds to 212 to 242 (AKAAGGGEHVRTTLTGVTVGIDVSGAEKIWR). Residues 243–263 (TFQAIGDIAFAYAYSTVLIEI) form a helical membrane-spanning segment. The Cytoplasmic portion of the chain corresponds to 264–283 (QDTLKAGPPSENKAMKRASL). The helical transmembrane segment at 284-304 (VGVSTTTFFYMLCGCVGYAAF) threads the bilayer. Residues 305–321 (GNDAPGNFLTGFGFYEP) lie on the Extracellular side of the membrane. Residues 322-342 (FWLIDFANVCIAVHLIGAYQV) form a helical membrane-spanning segment. Topologically, residues 343–385 (FCQPIFQFVESQSAKRWPDNKFITGEYKIHVPCCGDFSINFLR) are cytoplasmic. Residues 386–405 (LVWRTSYVVVTAVVAMIFPF) form a helical membrane-spanning segment. Topologically, residues 406–408 (FND) are extracellular. A helical transmembrane segment spans residues 409–427 (FLGLIGAASFWPLTVYFPI). The Cytoplasmic portion of the chain corresponds to 428 to 447 (EMHIAQKKIPKFSFTWTWLK). Residues 448–468 (ILSWTCFIVSLVAAAGSVQGL) form a helical membrane-spanning segment. Over 469 to 481 (IQSLKDFKPFQAP) the chain is Extracellular.

The protein belongs to the amino acid/polyamine transporter 2 family. Amino acid/auxin permease (AAAP) (TC 2.A.18.2) subfamily. In terms of tissue distribution, expressed in roots and leaves, and at lower levels in stems and flowers. Found in the xylem parenchyma.

It is found in the cell membrane. Its function is as follows. Amino acid-proton symporter. Stereospecific transporter with a broad specificity for tryptophan, proline, and neutral and acidic amino acids. Has an affinity for aspartate in a physiological range. Involved in the uptake of amino acids diffusing out of the xylem tracheids into the xylem parenchyma. In Arabidopsis thaliana (Mouse-ear cress), this protein is Amino acid permease 6 (AAP6).